A 433-amino-acid chain; its full sequence is Enolase (433 aa).

Gln-166 is a binding site for (2R)-2-phosphoglycerate. Glu-208 functions as the Proton donor in the catalytic mechanism. The Mg(2+) site is built by Asp-245, Glu-290, and Asp-317. The (2R)-2-phosphoglycerate site is built by Lys-342, Arg-371, Ser-372, and Lys-393. The active-site Proton acceptor is the Lys-342.

This sequence belongs to the enolase family. Mg(2+) is required as a cofactor.

It localises to the cytoplasm. Its subcellular location is the secreted. It is found in the cell surface. It catalyses the reaction (2R)-2-phosphoglycerate = phosphoenolpyruvate + H2O. It functions in the pathway carbohydrate degradation; glycolysis; pyruvate from D-glyceraldehyde 3-phosphate: step 4/5. Functionally, catalyzes the reversible conversion of 2-phosphoglycerate (2-PG) into phosphoenolpyruvate (PEP). It is essential for the degradation of carbohydrates via glycolysis. This is Enolase from Clostridium novyi (strain NT).